Consider the following 534-residue polypeptide: Beta-glucosidase 32 (534 aa).

The first 22 residues, 1-22 (MAIKLIALVITICVASWDSAQG), serve as a signal peptide directing secretion. Gln-51 serves as a coordination point for a beta-D-glucoside. Residue Asn-68 is glycosylated (N-linked (GlcNAc...) asparagine). A beta-D-glucoside is bound by residues His-154 and 199–200 (NE). Catalysis depends on Glu-200, which acts as the Proton donor. Residues Cys-219 and Cys-227 are joined by a disulfide bond. Tyr-344 is a binding site for a beta-D-glucoside. A glycan (N-linked (GlcNAc...) asparagine) is linked at Asn-374. A beta-D-glucoside is bound at residue Glu-417. Glu-417 serves as the catalytic Nucleophile. N-linked (GlcNAc...) asparagine glycosylation is present at Asn-425. A beta-D-glucoside-binding positions include Trp-467, 474-475 (EW), and Phe-483.

Belongs to the glycosyl hydrolase 1 family.

The catalysed reaction is Hydrolysis of terminal, non-reducing beta-D-glucosyl residues with release of beta-D-glucose.. The polypeptide is Beta-glucosidase 32 (Arabidopsis thaliana (Mouse-ear cress)).